The following is a 207-amino-acid chain: Oligoribonuclease (207 aa).

One can recognise an Exonuclease domain in the interval Leu8–Leu172. The active site involves Tyr129.

It belongs to the oligoribonuclease family.

The protein localises to the cytoplasm. Its function is as follows. 3'-to-5' exoribonuclease specific for small oligoribonucleotides. The protein is Oligoribonuclease of Leifsonia xyli subsp. xyli (strain CTCB07).